We begin with the raw amino-acid sequence, 165 residues long: Putative 4-hydroxy-4-methyl-2-oxoglutarate aldolase (165 aa).

Residues 80–83 (GGNL) and R102 contribute to the substrate site. D103 lines the a divalent metal cation pocket.

The protein belongs to the class II aldolase/RraA-like family. As to quaternary structure, homotrimer. A divalent metal cation serves as cofactor.

The catalysed reaction is 4-hydroxy-4-methyl-2-oxoglutarate = 2 pyruvate. It carries out the reaction oxaloacetate + H(+) = pyruvate + CO2. In terms of biological role, catalyzes the aldol cleavage of 4-hydroxy-4-methyl-2-oxoglutarate (HMG) into 2 molecules of pyruvate. Also contains a secondary oxaloacetate (OAA) decarboxylase activity due to the common pyruvate enolate transition state formed following C-C bond cleavage in the retro-aldol and decarboxylation reactions. The polypeptide is Putative 4-hydroxy-4-methyl-2-oxoglutarate aldolase (Cupriavidus taiwanensis (strain DSM 17343 / BCRC 17206 / CCUG 44338 / CIP 107171 / LMG 19424 / R1) (Ralstonia taiwanensis (strain LMG 19424))).